The primary structure comprises 278 residues: Potassium/proton antiporter CemA (278 aa).

The next 4 helical transmembrane spans lie at Ile-61–Gly-81, Ala-155–Thr-175, Ile-203–Ile-223, and Phe-238–Ile-258.

Belongs to the CemA family.

The protein resides in the plastid. Its subcellular location is the chloroplast inner membrane. The catalysed reaction is K(+)(in) + H(+)(out) = K(+)(out) + H(+)(in). Its function is as follows. Contributes to K(+)/H(+) antiport activity by supporting proton efflux to control proton extrusion and homeostasis in chloroplasts in a light-dependent manner to modulate photosynthesis. Prevents excessive induction of non-photochemical quenching (NPQ) under continuous-light conditions. Indirectly promotes efficient inorganic carbon uptake into chloroplasts. The chain is Potassium/proton antiporter CemA from Porphyra purpurea (Red seaweed).